The sequence spans 36 residues: Photosystem I reaction center subunit VIII (36 aa).

A helical membrane pass occupies residues 9–29 (IFVPLVGLVFPAIAMASLSLY).

The protein belongs to the PsaI family.

The protein resides in the plastid. The protein localises to the chloroplast thylakoid membrane. In terms of biological role, may help in the organization of the PsaL subunit. This is Photosystem I reaction center subunit VIII from Phalaenopsis aphrodite subsp. formosana (Moth orchid).